We begin with the raw amino-acid sequence, 289 residues long: Phospholipase A1 (289 aa).

A signal peptide spans 1 to 20; that stretch reads MRTGPGWLLAAAALPFFACA. Topologically, residues 21-52 are periplasmic; that stretch reads QEATIDKVHDTPAVRGSIIANMLQEHDNPFTL. A beta stranded transmembrane segment spans residues 53-65; that stretch reads YPYESNYLLYTYT. The Extracellular segment spans residues 66–84; sequence SDLNKKAIESYNWSDNANK. The chain crosses the membrane as a beta stranded span at residues 85-99; it reads DEVKFQLSLAFPLWR. At 100-105 the chain is on the periplasmic side; that stretch reads GILGDN. Residues 106–118 form a beta stranded membrane-spanning segment; the sequence is SLLGASYTQRSWW. At 119–128 the chain is on the extracellular side; it reads QLSNTGESAP. Residue Ser-126 coordinates Ca(2+). Residues 129 to 148 traverse the membrane as a beta stranded segment; that stretch reads FRETNYEPQLFLGFATDYSV. At 149–150 the chain is on the periplasmic side; that stretch reads GD. A beta stranded membrane pass occupies residues 151–164; sequence WTLRDAEFGYNHQS. Catalysis depends on His-162, which acts as the Proton acceptor. The active-site Nucleophile is the Ser-164. At 165–173 the chain is on the extracellular side; it reads NGRSDPTSR. Ca(2+) is bound by residues Arg-167 and Ser-172. The chain crosses the membrane as a beta stranded span at residues 174 to 186; the sequence is SWNRLYSRLMAQN. At 187–188 the chain is on the periplasmic side; the sequence is GN. A beta stranded transmembrane segment spans residues 189–198; it reads WLVEVKPWYV. At 199–216 the chain is on the extracellular side; sequence IGDTSDNKNITKYMGYYQ. Residue Asp-204 coordinates Ca(2+). The chain crosses the membrane as a beta stranded span at residues 217-223; sequence LKIGYQL. Residues 224 to 225 are Periplasmic-facing; the sequence is GE. A beta stranded transmembrane segment spans residues 226–234; that stretch reads AVLSAKGQY. Residues 235 to 241 are Extracellular-facing; sequence NWNTGYG. The beta stranded transmembrane segment at 242-250 threads the bilayer; that stretch reads GAELGVSYP. Residues 251–255 are Periplasmic-facing; it reads ITKHV. Residues 256–265 traverse the membrane as a beta stranded segment; that stretch reads RFYTQVYSGY. Over 266 to 274 the chain is Extracellular; it reads GESLIDYDF. The beta stranded transmembrane segment at 275-286 threads the bilayer; it reads NQTRVGMGVMLN. At 287–289 the chain is on the periplasmic side; sequence DLF.

Belongs to the phospholipase A1 family. As to quaternary structure, homodimer; dimerization is reversible, and the dimeric form is the active one. The cofactor is Ca(2+).

The protein localises to the cell outer membrane. It catalyses the reaction a 1,2-diacyl-sn-glycero-3-phosphocholine + H2O = a 2-acyl-sn-glycero-3-phosphocholine + a fatty acid + H(+). The catalysed reaction is a 1,2-diacyl-sn-glycero-3-phosphocholine + H2O = a 1-acyl-sn-glycero-3-phosphocholine + a fatty acid + H(+). In terms of biological role, hydrolysis of phosphatidylcholine with phospholipase A2 (EC 3.1.1.4) and phospholipase A1 (EC 3.1.1.32) activities. This is Phospholipase A1 (pldA) from Proteus vulgaris.